The primary structure comprises 139 residues: uncharacterized protein (139 aa).

The region spanning 3–110 (IFCNIVEGRD…VPTWSQDPDI (108 aa)) is the HIT domain. The Histidine triad motif motif lies at 95–99 (HSHFH).

This is an uncharacterized protein from Saccharolobus solfataricus (strain ATCC 35092 / DSM 1617 / JCM 11322 / P2) (Sulfolobus solfataricus).